The primary structure comprises 232 residues: 7-cyano-7-deazaguanine synthase (232 aa).

An ATP-binding site is contributed by 8-18; it reads FSGGQDSTTCL. The Zn(2+) site is built by Cys-189, Cys-198, Cys-201, and Cys-204.

This sequence belongs to the QueC family. It depends on Zn(2+) as a cofactor.

It carries out the reaction 7-carboxy-7-deazaguanine + NH4(+) + ATP = 7-cyano-7-deazaguanine + ADP + phosphate + H2O + H(+). It participates in purine metabolism; 7-cyano-7-deazaguanine biosynthesis. Functionally, catalyzes the ATP-dependent conversion of 7-carboxy-7-deazaguanine (CDG) to 7-cyano-7-deazaguanine (preQ(0)). The chain is 7-cyano-7-deazaguanine synthase from Yersinia pseudotuberculosis serotype O:1b (strain IP 31758).